Consider the following 316-residue polypeptide: 2,3-dihydroxyphenylpropionate/2,3-dihydroxicinnamic acid 1,2-dioxygenase (316 aa).

His-115 acts as the Proton donor in catalysis. His-179 (proton acceptor) is an active-site residue.

This sequence belongs to the LigB/MhpB extradiol dioxygenase family. Homotetramer. Fe(2+) is required as a cofactor.

The catalysed reaction is 3-(2,3-dihydroxyphenyl)propanoate + O2 = (2Z,4E)-2-hydroxy-6-oxonona-2,4-dienedioate + H(+). It carries out the reaction (2E)-3-(2,3-dihydroxyphenyl)prop-2-enoate + O2 = (2Z,4E,7E)-2-hydroxy-6-oxonona-2,4,7-trienedioate + H(+). Its pathway is aromatic compound metabolism; 3-phenylpropanoate degradation. Catalyzes the non-heme iron(II)-dependent oxidative cleavage of 2,3-dihydroxyphenylpropionic acid and 2,3-dihydroxicinnamic acid into 2-hydroxy-6-ketononadienedioate and 2-hydroxy-6-ketononatrienedioate, respectively. The protein is 2,3-dihydroxyphenylpropionate/2,3-dihydroxicinnamic acid 1,2-dioxygenase of Paraburkholderia xenovorans (strain LB400).